The following is a 164-amino-acid chain: UPF0304 protein MS2240 (164 aa).

The protein belongs to the UPF0304 family.

The protein is UPF0304 protein MS2240 of Mannheimia succiniciproducens (strain KCTC 0769BP / MBEL55E).